The sequence spans 182 residues: UPF0397 protein BCE_2667 (182 aa).

A run of 5 helical transmembrane segments spans residues 9–29, 40–60, 71–91, 114–134, and 142–162; these read VVAI…GFSI, AILT…IGLI, WGIW…MGLI, ITGL…DIIV, and IVIQ…VLGL.

The protein belongs to the UPF0397 family.

It localises to the cell membrane. The sequence is that of UPF0397 protein BCE_2667 from Bacillus cereus (strain ATCC 10987 / NRS 248).